Here is a 359-residue protein sequence, read N- to C-terminus: 3-dehydroquinate synthase (359 aa).

Residues 71–76 (DGEQFK), 105–109 (GVIGD), 129–130 (TT), K142, K151, and 169–172 (CLQT) each bind NAD(+). Residues E184, H247, and H264 each coordinate Zn(2+).

The protein belongs to the sugar phosphate cyclases superfamily. Dehydroquinate synthase family. Co(2+) serves as cofactor. The cofactor is Zn(2+). It depends on NAD(+) as a cofactor.

Its subcellular location is the cytoplasm. The catalysed reaction is 7-phospho-2-dehydro-3-deoxy-D-arabino-heptonate = 3-dehydroquinate + phosphate. It functions in the pathway metabolic intermediate biosynthesis; chorismate biosynthesis; chorismate from D-erythrose 4-phosphate and phosphoenolpyruvate: step 2/7. Functionally, catalyzes the conversion of 3-deoxy-D-arabino-heptulosonate 7-phosphate (DAHP) to dehydroquinate (DHQ). The sequence is that of 3-dehydroquinate synthase from Shewanella sp. (strain MR-4).